A 35-amino-acid chain; its full sequence is Photosystem II reaction center protein M (35 aa).

A helical membrane pass occupies residues 5–25 (ILAFIATALFILVPTAFLLII).

It belongs to the PsbM family. PSII is composed of 1 copy each of membrane proteins PsbA, PsbB, PsbC, PsbD, PsbE, PsbF, PsbH, PsbI, PsbJ, PsbK, PsbL, PsbM, PsbT, PsbX, PsbY, PsbZ, Psb30/Ycf12, at least 3 peripheral proteins of the oxygen-evolving complex and a large number of cofactors. It forms dimeric complexes.

It localises to the plastid. It is found in the chloroplast thylakoid membrane. One of the components of the core complex of photosystem II (PSII). PSII is a light-driven water:plastoquinone oxidoreductase that uses light energy to abstract electrons from H(2)O, generating O(2) and a proton gradient subsequently used for ATP formation. It consists of a core antenna complex that captures photons, and an electron transfer chain that converts photonic excitation into a charge separation. This subunit is found at the monomer-monomer interface. This Panax quinquefolius (American ginseng) protein is Photosystem II reaction center protein M.